The primary structure comprises 67 residues: ATP synthase protein 8 (67 aa).

A helical membrane pass occupies residues 8-24; that stretch reads TWSITIMSMIMTLFIVF. K54 bears the N6-acetyllysine; alternate mark. K54 carries the post-translational modification N6-succinyllysine; alternate. An N6-acetyllysine modification is found at K57.

This sequence belongs to the ATPase protein 8 family. F-type ATPases have 2 components, CF(1) - the catalytic core - and CF(0) - the membrane proton channel. Component of an ATP synthase complex composed of ATP5PB, ATP5MC1, ATP5F1E, ATP5PD, ATP5ME, ATP5PF, ATP5MF, MT-ATP6, MT-ATP8, ATP5F1A, ATP5F1B, ATP5F1D, ATP5F1C, ATP5PO, ATP5MG, ATP5MK and ATP5MJ. Interacts with PRICKLE3.

It is found in the mitochondrion membrane. Its function is as follows. Mitochondrial membrane ATP synthase (F(1)F(0) ATP synthase or Complex V) produces ATP from ADP in the presence of a proton gradient across the membrane which is generated by electron transport complexes of the respiratory chain. F-type ATPases consist of two structural domains, F(1) - containing the extramembraneous catalytic core and F(0) - containing the membrane proton channel, linked together by a central stalk and a peripheral stalk. During catalysis, ATP synthesis in the catalytic domain of F(1) is coupled via a rotary mechanism of the central stalk subunits to proton translocation. Part of the complex F(0) domain. Minor subunit located with subunit a in the membrane. The sequence is that of ATP synthase protein 8 (MT-ATP8) from Felis silvestris lybica (African wildcat).